Here is a 227-residue protein sequence, read N- to C-terminus: tRNA (guanine-N(1)-)-methyltransferase (227 aa).

S-adenosyl-L-methionine-binding positions include G107 and 127–132 (LGDFIL).

This sequence belongs to the RNA methyltransferase TrmD family. In terms of assembly, homodimer.

It is found in the cytoplasm. The catalysed reaction is guanosine(37) in tRNA + S-adenosyl-L-methionine = N(1)-methylguanosine(37) in tRNA + S-adenosyl-L-homocysteine + H(+). In terms of biological role, specifically methylates guanosine-37 in various tRNAs. This is tRNA (guanine-N(1)-)-methyltransferase from Mesomycoplasma hyopneumoniae (strain 7448) (Mycoplasma hyopneumoniae).